The following is a 272-amino-acid chain: Putative UTP--glucose-1-phosphate uridylyltransferase (272 aa).

Belongs to the UDPGP type 2 family.

It catalyses the reaction alpha-D-glucose 1-phosphate + UTP + H(+) = UDP-alpha-D-glucose + diphosphate. The sequence is that of Putative UTP--glucose-1-phosphate uridylyltransferase (ytdA) from Bacillus subtilis (strain 168).